The sequence spans 378 residues: Dual-specificity RNA methyltransferase RlmN (378 aa).

Residue E97 is the Proton acceptor of the active site. The region spanning 103–341 is the Radical SAM core domain; that stretch reads EGDRATLCVS…VMVRKTRGDD (239 aa). C110 and C346 are disulfide-bonded. Residues C117, C121, and C124 each coordinate [4Fe-4S] cluster. Residues 171–172, S203, 225–227, and N303 each bind S-adenosyl-L-methionine; these read GE and SLH. C346 functions as the S-methylcysteine intermediate in the catalytic mechanism.

Belongs to the radical SAM superfamily. RlmN family. It depends on [4Fe-4S] cluster as a cofactor.

It localises to the cytoplasm. It catalyses the reaction adenosine(2503) in 23S rRNA + 2 reduced [2Fe-2S]-[ferredoxin] + 2 S-adenosyl-L-methionine = 2-methyladenosine(2503) in 23S rRNA + 5'-deoxyadenosine + L-methionine + 2 oxidized [2Fe-2S]-[ferredoxin] + S-adenosyl-L-homocysteine. The catalysed reaction is adenosine(37) in tRNA + 2 reduced [2Fe-2S]-[ferredoxin] + 2 S-adenosyl-L-methionine = 2-methyladenosine(37) in tRNA + 5'-deoxyadenosine + L-methionine + 2 oxidized [2Fe-2S]-[ferredoxin] + S-adenosyl-L-homocysteine. In terms of biological role, specifically methylates position 2 of adenine 2503 in 23S rRNA and position 2 of adenine 37 in tRNAs. m2A2503 modification seems to play a crucial role in the proofreading step occurring at the peptidyl transferase center and thus would serve to optimize ribosomal fidelity. The sequence is that of Dual-specificity RNA methyltransferase RlmN from Idiomarina loihiensis (strain ATCC BAA-735 / DSM 15497 / L2-TR).